The chain runs to 219 residues: Thymidylate kinase (219 aa).

G9 to T16 is a binding site for ATP.

The protein belongs to the thymidylate kinase family.

It catalyses the reaction dTMP + ATP = dTDP + ADP. Functionally, phosphorylation of dTMP to form dTDP in both de novo and salvage pathways of dTTP synthesis. The polypeptide is Thymidylate kinase (Pelobacter propionicus (strain DSM 2379 / NBRC 103807 / OttBd1)).